We begin with the raw amino-acid sequence, 222 residues long: Small ribosomal subunit protein uS3 (222 aa).

The 71-residue stretch at 39-109 folds into the KH type-2 domain; sequence IRNFVKKKVY…NILINIVEVK (71 aa).

The protein belongs to the universal ribosomal protein uS3 family. As to quaternary structure, part of the 30S ribosomal subunit. Forms a tight complex with proteins S10 and S14.

Functionally, binds the lower part of the 30S subunit head. Binds mRNA in the 70S ribosome, positioning it for translation. This chain is Small ribosomal subunit protein uS3, found in Clostridium tetani (strain Massachusetts / E88).